The following is a 284-amino-acid chain: Diaminopimelate epimerase (284 aa).

Positions 20, 53, and 73 each coordinate substrate. Catalysis depends on cysteine 82, which acts as the Proton donor. Substrate-binding positions include 83–84, asparagine 167, asparagine 200, and 218–219; these read GN and ER. Catalysis depends on cysteine 227, which acts as the Proton acceptor. 228-229 is a substrate binding site; it reads GS.

This sequence belongs to the diaminopimelate epimerase family. In terms of assembly, homodimer.

It is found in the cytoplasm. The enzyme catalyses (2S,6S)-2,6-diaminopimelate = meso-2,6-diaminopimelate. It functions in the pathway amino-acid biosynthesis; L-lysine biosynthesis via DAP pathway; DL-2,6-diaminopimelate from LL-2,6-diaminopimelate: step 1/1. In terms of biological role, catalyzes the stereoinversion of LL-2,6-diaminopimelate (L,L-DAP) to meso-diaminopimelate (meso-DAP), a precursor of L-lysine and an essential component of the bacterial peptidoglycan. The protein is Diaminopimelate epimerase of Xylella fastidiosa (strain M12).